Here is a 115-residue protein sequence, read N- to C-terminus: MQKLIEDITKEQLRTDLPAFRPGDTLRVHVKVVEGNRERIQIFEGVVIKRRGGGISETFTVRKISYGVGVERTFPVHTPKIAKIEVVRYGKVRRAKLYYLRELRGKAARIKEIRR.

Belongs to the bacterial ribosomal protein bL19 family. Part of the 50S ribosomal subunit.

This protein is located at the 30S-50S ribosomal subunit interface and may play a role in the structure and function of the aminoacyl-tRNA binding site. This is Large ribosomal subunit protein bL19 (rplS) from Bacillus subtilis (strain 168).